A 117-amino-acid chain; its full sequence is Glycoprotein hormones alpha chain (117 aa).

The N-terminal stretch at 1 to 23 (MGSVKSAGLSLLLLSFLLYVADS) is a signal peptide. 5 disulfides stabilise this stretch: cysteine 34/cysteine 57, cysteine 37/cysteine 86, cysteine 54/cysteine 107, cysteine 58/cysteine 109, and cysteine 85/cysteine 112. N-linked (GlcNAc...) asparagine glycosylation is found at asparagine 78 and asparagine 103.

It belongs to the glycoprotein hormones subunit alpha family. In terms of assembly, heterodimer. Glycoprotein hormones are heterodimers composed of a common alpha chain described here and a unique beta chain which confers their biological specificity to the different hormones.

The protein localises to the secreted. In terms of biological role, shared alpha chain of heterodimeric glycoprotein hormones. These hormones bind specific receptors on target cells that in turn activate downstream signaling pathways. Involved in gametogenesis and steroidogenesis. The chain is Glycoprotein hormones alpha chain (cga) from Acanthopagrus latus (Yellowfin seabream).